Here is a 597-residue protein sequence, read N- to C-terminus: 2-isopropylmalate synthase (597 aa).

Positions 1–80 (MQLDIDRLVA…QKNESLERTE (80 aa)) are unknown. The 263-residue stretch at 87–349 (VIIFDTTLRD…ETGIDTTQIV (263 aa)) folds into the Pyruvate carboxyltransferase domain. Positions 87-349 (VIIFDTTLRD…ETGIDTTQIV (263 aa)) are 2-isopropylmalate synthase. Mn(2+) is bound by residues Asp-96, His-284, His-286, and Asn-320. The tract at residues 475 to 597 (KFISQKISTE…KPKAQGSGTI (123 aa)) is regulatory domain.

The protein belongs to the alpha-IPM synthase/homocitrate synthase family. LeuA type 1 subfamily. As to quaternary structure, homodimer. Mn(2+) is required as a cofactor.

Its subcellular location is the cytoplasm. It carries out the reaction 3-methyl-2-oxobutanoate + acetyl-CoA + H2O = (2S)-2-isopropylmalate + CoA + H(+). It functions in the pathway amino-acid biosynthesis; L-leucine biosynthesis; L-leucine from 3-methyl-2-oxobutanoate: step 1/4. Its function is as follows. Catalyzes the condensation of the acetyl group of acetyl-CoA with 3-methyl-2-oxobutanoate (2-ketoisovalerate) to form 3-carboxy-3-hydroxy-4-methylpentanoate (2-isopropylmalate). This chain is 2-isopropylmalate synthase, found in Neisseria gonorrhoeae (strain ATCC 700825 / FA 1090).